Consider the following 211-residue polypeptide: Putative ankyrin repeat protein R810 (211 aa).

5 ANK repeats span residues 31 to 61, 72 to 101, 103 to 131, 133 to 162, and 163 to 191; these read TKFI…NLKY, NIND…DICA, QNSP…KFFG, YSSA…FCLE, and MEIA…SYFD.

This chain is Putative ankyrin repeat protein R810, found in Acanthamoeba polyphaga mimivirus (APMV).